Consider the following 339-residue polypeptide: Isopentenyl-diphosphate delta-isomerase (339 aa).

Position 7–8 (7–8 (RK)) interacts with substrate. FMN contacts are provided by residues S65, 66–68 (SMT), S96, and N125. 96-98 (SQR) contacts substrate. Q160 lines the substrate pocket. Residue E161 participates in Mg(2+) binding. FMN is bound by residues K192, T222, and 293-294 (AG).

Belongs to the IPP isomerase type 2 family. As to quaternary structure, homooctamer. Dimer of tetramers. Requires FMN as cofactor. NADPH serves as cofactor. It depends on Mg(2+) as a cofactor.

Its subcellular location is the cytoplasm. It carries out the reaction isopentenyl diphosphate = dimethylallyl diphosphate. Its function is as follows. Involved in the biosynthesis of isoprenoids. Catalyzes the 1,3-allylic rearrangement of the homoallylic substrate isopentenyl (IPP) to its allylic isomer, dimethylallyl diphosphate (DMAPP). This is Isopentenyl-diphosphate delta-isomerase from Vibrio parahaemolyticus serotype O3:K6 (strain RIMD 2210633).